Consider the following 147-residue polypeptide: Large ribosomal subunit protein bL9 (147 aa).

It belongs to the bacterial ribosomal protein bL9 family.

In terms of biological role, binds to the 23S rRNA. The chain is Large ribosomal subunit protein bL9 from Clostridium kluyveri (strain NBRC 12016).